A 278-amino-acid chain; its full sequence is MGPDPSLAYRPECHEKDKTEFRNFENGDLFDRVFNTYKLMHTHQTLDFVKQKHQVWSNCSHFSLSMMDSIDSLDELVDESDPDVDFPNSFHAFQTAEGIRREHPDKDWFQLVGLIHDVGKVMALYSEPQWAVVGDTYPVGCKFQNSIVFRNSTFEGNPDGKNPAPNTEFGIYEPQCGLDKVLMSWGHDEYLYRVMKFNKCTIPEEGLYMIRFHSFYPWHSNGDYMHLCNEKDQQMLPWVKEFNKFDLYTKSTELPDVERLKPYYQSLIDKYCPGVLQW.

Residues Arg22 and Asp78–Ser80 each bind substrate. The Fe cation site is built by His91, His116, and Asp117. Substrate is bound by residues Lys120 and Gly134–Asp135. Fe cation contacts are provided by His187, His213, and Asp246. His213–Ser214 provides a ligand contact to substrate.

The protein belongs to the myo-inositol oxygenase family. It depends on Fe cation as a cofactor.

It is found in the cytoplasm. The catalysed reaction is myo-inositol + O2 = D-glucuronate + H2O + H(+). It functions in the pathway polyol metabolism; myo-inositol degradation into D-glucuronate; D-glucuronate from myo-inositol: step 1/1. This is Inositol oxygenase (miox) from Danio rerio (Zebrafish).